We begin with the raw amino-acid sequence, 473 residues long: Pentatricopeptide repeat-containing protein At3g60050 (473 aa).

9 PPR repeats span residues 148-182, 183-217, 218-252, 253-287, 288-322, 323-357, 358-392, 393-427, and 428-462; these read TVNS…GFPT, TART…NYRP, FKHS…GFSP, DVLT…GFSP, DSYT…GIDP, SVLH…GCRP, DVVC…GQLP, NVFT…GCNP, and NFVV…GHYV.

It belongs to the PPR family. P subfamily.

The chain is Pentatricopeptide repeat-containing protein At3g60050 from Arabidopsis thaliana (Mouse-ear cress).